A 543-amino-acid chain; its full sequence is MIRAGGPSPSPRGRRAGPIRLPRRAPSSTPTRAKTEEKASADASSRTGADAEVQFEAVIGIETHVQLNCRTKAFCRCAAVYGDEPNTHCCPTCMGYPGTYPVLSEAVVRKAVQLGLGLNARVRRRSKFDRKQYFYPDLPKGYQISQFDEPIAEGGYIDVVIPVEDGGGVRRIGITRAHVEEDAGKLTHYPAKGDTPGYALADYNRAGVALVEIVSEPDMRTGREVAAYGAELRRLVRYLDVGDGNLSEGSMRCDVNVSVRPVGREAFGTKVEVKNMNSFNAMSRAIDFEIDRQTALIRAGKGDEIVQETRTWDEGRQCTVSMRKKEGLADYRYFPEPDLPPLVFDEAFVEKCASAMPELPGAIRARYADLGLPPADVQVLVEDKELVEYFDAALAAGAPAKQCANWLTGDVMAWLKNAKDVAVSSMPLSATQLAEFCTLIEDGVISGKIGKDILPDLLEGKEGNKSVGDIVEERGLKQISDPKEIEAIVDRVLEANPGQLEQYRGGKDKLKGFFVGAVLRESGGRANPALSNEILMRKLNEGR.

Residues 1–47 are disordered; the sequence is MIRAGGPSPSPRGRRAGPIRLPRRAPSSTPTRAKTEEKASADASSRT. Residues 12–23 are compositionally biased toward basic residues; that stretch reads RGRRAGPIRLPR.

Belongs to the GatB/GatE family. GatB subfamily. Subunit of the heterotrimeric GatCAB amidotransferase (AdT) complex, composed of A, B and C subunits.

The protein localises to the mitochondrion. It is found in the plastid. It localises to the chloroplast. It carries out the reaction L-glutamyl-tRNA(Gln) + L-glutamine + ATP + H2O = L-glutaminyl-tRNA(Gln) + L-glutamate + ADP + phosphate + H(+). Functionally, allows the formation of correctly charged Gln-tRNA(Gln) through the transamidation of misacylated Glu-tRNA(Gln) in chloroplasts and mitochondria. The reaction takes place in the presence of glutamine and ATP through an activated gamma-phospho-Glu-tRNA(Gln). The polypeptide is Glutamyl-tRNA(Gln) amidotransferase subunit B-1, chloroplastic/mitochondrial (Micromonas commoda (strain RCC299 / NOUM17 / CCMP2709) (Picoplanktonic green alga)).